A 105-amino-acid polypeptide reads, in one-letter code: Large ribosomal subunit protein uL24 (105 aa).

It belongs to the universal ribosomal protein uL24 family. In terms of assembly, part of the 50S ribosomal subunit.

Functionally, one of two assembly initiator proteins, it binds directly to the 5'-end of the 23S rRNA, where it nucleates assembly of the 50S subunit. One of the proteins that surrounds the polypeptide exit tunnel on the outside of the subunit. This chain is Large ribosomal subunit protein uL24, found in Clostridium botulinum (strain ATCC 19397 / Type A).